A 246-amino-acid chain; its full sequence is Probable ABC transporter permease protein BMEII0107 (246 aa).

6 helical membrane-spanning segments follow: residues 12-32 (LLSF…GAVV), 63-83 (VLSG…LMGW), 94-114 (WVQF…IVTL), 122-142 (IFVI…QGVI), 172-192 (VPFI…TVVA), and 211-231 (LYYD…LGLF). The 181-residue stretch at 56-236 (IFASLRRVLS…ILGLFMDRLL (181 aa)) folds into the ABC transmembrane type-1 domain.

Belongs to the binding-protein-dependent transport system permease family. The complex is composed of two ATP-binding proteins (BMEII0108), two transmembrane proteins (BMEII0107) and a solute-binding protein (BMEII0109).

The protein localises to the cell inner membrane. Probably part of an ABC transporter complex. Probably responsible for the translocation of the substrate across the membrane. The sequence is that of Probable ABC transporter permease protein BMEII0107 from Brucella melitensis biotype 1 (strain ATCC 23456 / CCUG 17765 / NCTC 10094 / 16M).